The chain runs to 678 residues: Oviduct-specific glycoprotein (678 aa).

A signal peptide spans 1–21 (MWKLLLWVGLVLVLKHHDGAA). Residues 22 to 385 (HKLVCYFTNW…YVLNDILVRA (364 aa)) enclose the GH18 domain. The cysteines at positions 26 and 51 are disulfide-linked. Residues 71 to 72 (LQ), 98 to 101 (GGWN), Y142, 211 to 214 (LSYD), and W355 contribute to the chitin site. Residues N402 and N441 are each glycosylated (N-linked (GlcNAc...) asparagine). Residues 524–544 (LTPVGHQSVTPVSHQSVSPGG) form a disordered region. Residues 528–544 (GHQSVTPVSHQSVSPGG) are compositionally biased toward polar residues. N-linked (GlcNAc...) asparagine glycans are attached at residues N580, N596, and N648. Residues 581-606 (ISVTPEGQTMPLRGENLTSEVGTHPR) are disordered. Over residues 651–662 (SVNSVTPQTSPL) the composition is skewed to polar residues. The interval 651-678 (SVNSVTPQTSPLSLKKEIPENSAVDEEA) is disordered.

It belongs to the glycosyl hydrolase 18 family. As to expression, oviduct.

It is found in the cytoplasmic vesicle. The protein resides in the secretory vesicle. In terms of biological role, binds to oocyte zona pellucida in vivo. May play a role in the fertilization process and/or early embryonic development. This chain is Oviduct-specific glycoprotein (OVGP1), found in Homo sapiens (Human).